Consider the following 167-residue polypeptide: Beta-3 adrenergic receptor (167 aa).

At 1-25 (RVGADAEAQECHSNPRCCSFASNMP) the chain is on the extracellular side. A disulfide bridge links Cys-11 with Cys-17. A helical membrane pass occupies residues 26–47 (YALLSSSVSFYLPLLVMLFVYA). Over 48 to 114 (RVFVVAKRQR…LPLREHRALR (67 aa)) the chain is Cytoplasmic. The interval 66–97 (RFPPEESPRSPSRSPSPVAGGTGEAPDGVPSC) is disordered. A helical transmembrane segment spans residues 115-136 (TLGLIMGIFSLCWLPFFLANVL). Topologically, residues 137 to 148 (RALAGPSIVPNG) are extracellular. Residues 149–167 (VFIALNWLGYANSAFNPLI) form a helical membrane-spanning segment.

This sequence belongs to the G-protein coupled receptor 1 family. Adrenergic receptor subfamily. ADRB3 sub-subfamily. Interacts with ARRDC3.

It localises to the cell membrane. Functionally, beta-adrenergic receptors mediate the catecholamine-induced activation of adenylate cyclase through the action of G proteins. Beta-3 is involved in the regulation of lipolysis and thermogenesis. This Meriones unguiculatus (Mongolian jird) protein is Beta-3 adrenergic receptor (ADRB3).